Consider the following 257-residue polypeptide: MTIWEAFFLGLIQGVTEFLPISSSGHLELAQYFLGFEKLQSYVLFNLICHLGTLGSILYMFLPQIKQSLITERNHIFHIILGTLPLFPLVLILKPIKATFDQPQYLGLCFLFSAALLFSGVYFRLQMQKKHSLRDCLTIGLFQAVAVLPGISRSGATISAARLLGWDKQDAIQFSFLLAIPAILGGTFLEIWQFLKLPASEIPPIEIGQFLTGFITSFMIGCASLWAVIQMMTQDKWVYFAWYCLFIGIATTLYFQM.

7 helical membrane-spanning segments follow: residues 42 to 62 (YVLFNLICHLGTLGSILYMFL), 76 to 96 (IFHIILGTLPLFPLVLILKPI), 103 to 123 (PQYLGLCFLFSAALLFSGVYF), 136 to 156 (CLTIGLFQAVAVLPGISRSGA), 172 to 192 (IQFSFLLAIPAILGGTFLEIW), 209 to 229 (QFLTGFITSFMIGCASLWAVI), and 237 to 257 (WVYFAWYCLFIGIATTLYFQM).

This sequence belongs to the UppP family.

It localises to the cell inner membrane. The enzyme catalyses di-trans,octa-cis-undecaprenyl diphosphate + H2O = di-trans,octa-cis-undecaprenyl phosphate + phosphate + H(+). Its function is as follows. Catalyzes the dephosphorylation of undecaprenyl diphosphate (UPP). Confers resistance to bacitracin. The polypeptide is Undecaprenyl-diphosphatase (Protochlamydia amoebophila (strain UWE25)).